A 196-amino-acid polypeptide reads, in one-letter code: uncharacterized protein (196 aa).

The segment covering 1–10 has biased composition (pro residues); sequence MPGMVPPHVP. Disordered stretches follow at residues 1 to 118 and 176 to 196; these read MPGM…EGSG and TEQA…SAPG. A compositionally biased stretch (low complexity) spans 25–45; sequence PVAPQVPSPGGAPGQGPYPYS. Over residues 54–69 the composition is skewed to polar residues; the sequence is LDTSGKNLTEQNSYSN.

This is an uncharacterized protein from Homo sapiens (Human).